The chain runs to 528 residues: Vacuolar fusion protein MON1 homolog (528 aa).

The segment covering 1 to 16 (MEVEQTSVRSDTNSTC) has biased composition (polar residues). Residues 1–50 (MEVEQTSVRSDTNSTCEYLDAEGDPESPNLYQEADPDQEAEQQNHSIISE) form a disordered region.

The protein belongs to the MON1/SAND family. As to quaternary structure, component of the Mon1-Ccz1 guanyl-nucleotide exchange factor complex made up of Mon1, Ccz1 and Bulli; the interaction of Bulli with the Mon1-Ccz1 heterodimer is mediated via the C-terminal Mic1 domain of Bulli. Mon1 and Ccz1 form a stable complex which displays Rab7 GEF activity with or without Bulli; GEF activity is enhanced by Bulli possibly by improving membrane association of the complex. Interacts with Rab5 and Rab7; preferentially binds GTP-bound Rab5 and GDP-bound Rab7.

The protein resides in the cytoplasm. Its subcellular location is the cytosol. With respect to regulation, the Rab7 guanyl-nucleotide exchange factor (GEF) activity of the Mon1-Ccz1 complex is autoinhibited by the N-terminal disordered region of Mon1. GEF activity is stimulated by Rab5-mediated recruitment to membranes. Functionally, part of the Mon1-Ccz1 guanyl-nucleotide exchange factor complex specific for Rab7 that promotes the exchange of GDP to GTP, converting Rab7 from an inactive GDP-bound form into an active GTP-bound form. Plays an important role in membrane trafficking through the secretory apparatus. Required for recruitment of Rab7 to endosomal and autophagosomal membranes to mediate endolysosomal and autolysosomal vesicle maturation. Required for fusion of multivesicular bodies and lysosomes but not their formation or trafficking. Involved in the replacement of Rab5 (and possibly Rab4) with Rab7, also known as Rab conversion or the Rab cascade, during endosomal maturation. The Mon1-Ccz1 complex is recruited to phosphatidylinositol 3-phosphate (PtdIns[3]P) enriched membranes by Rab5, which stimulates recruitment and guanyl-nucleotide exchange of Rab7. Together with Rab7 required for autolysosome formation in fat cells and autophagic degradation during starvation-induced basal and developmental autophagy. Involved in neuromuscular junction (NMJ) presynaptic bouton function and morphogenesis. Together with Rab7, regulates levels of postsynaptic glutamate receptor GluRIIA in the NMJ presynapse. This is Vacuolar fusion protein MON1 homolog from Drosophila melanogaster (Fruit fly).